The chain runs to 528 residues: Transcription factor cghF (528 aa).

The segment at 232-283 is disordered; it reads TPPNHATSSTPTSTRTPPTYHPHGPRPKSPLSSTPSPRTESTKSAAPSRDLA. Positions 238 to 249 are enriched in low complexity; it reads TSSTPTSTRTPP. Residues 261–276 are compositionally biased toward polar residues; sequence PLSSTPSPRTESTKSA.

It localises to the nucleus. Its function is as follows. Transcription factor that regulates the expression of the gene cluster that mediates the biosynthesis of the tetramic acid Sch210972, a potential anti-HIV fungal natural product that contains a decalin core. The protein is Transcription factor cghF of Chaetomium globosum (strain ATCC 6205 / CBS 148.51 / DSM 1962 / NBRC 6347 / NRRL 1970) (Soil fungus).